An 84-amino-acid polypeptide reads, in one-letter code: Small ribosomal subunit protein bS20 (84 aa).

This sequence belongs to the bacterial ribosomal protein bS20 family.

Its function is as follows. Binds directly to 16S ribosomal RNA. This Parabacteroides distasonis (strain ATCC 8503 / DSM 20701 / CIP 104284 / JCM 5825 / NCTC 11152) protein is Small ribosomal subunit protein bS20.